The chain runs to 83 residues: RNA-binding protein Hfq (83 aa).

A Sm domain is found at 9–68; sequence DPYLNALRKERIPVSIFLVNGIKLQGQIESFDQFVILLKNTVSQMVYKHAISTVVPARNV.

It belongs to the Hfq family. In terms of assembly, homohexamer.

Its function is as follows. RNA chaperone that binds small regulatory RNA (sRNAs) and mRNAs to facilitate mRNA translational regulation in response to envelope stress, environmental stress and changes in metabolite concentrations. Also binds with high specificity to tRNAs. This is RNA-binding protein Hfq from Marinobacter nauticus (strain ATCC 700491 / DSM 11845 / VT8) (Marinobacter aquaeolei).